Consider the following 1037-residue polypeptide: PH and SEC7 domain-containing protein 3 (1037 aa).

A disordered region spans residues 37-70 (EEKTPDSSDHGGSTLLPPTVTNEFPEYGTMEEGG). Ser-76 is modified (phosphoserine). 5 disordered regions span residues 169-189 (TASH…GKSP), 236-255 (RVPE…HNPV), 262-284 (REQR…SMGR), 304-335 (EAES…ACGV), and 353-375 (APSE…ESGE). Residues 237-251 (VPESACPVSSSSAGS) show a composition bias toward low complexity. Residues 262–277 (REQRSDLGREHPRGYD) show a composition bias toward basic and acidic residues. Residues 515-723 (NSVYTRGPQE…KALYNSIKNE (209 aa)) enclose the SEC7 domain. Positions 730–747 (DDEEKKKSPSEGTDEKAN) are enriched in basic and acidic residues. The tract at residues 730 to 762 (DDEEKKKSPSEGTDEKANGTHPKTISRIGSTTN) is disordered. Residues 750-762 (HPKTISRIGSTTN) are compositionally biased toward polar residues. Position 759 is a phosphoserine (Ser-759). The PH domain maps to 774–887 (AVYKSGFLAR…WINKINCVAA (114 aa)). Positions 911–941 (ATTTKLSQEEQLKSHESKLKQITTELAEHRS) form a coiled coil. Positions 984-1037 (LLTTDGNEPVGLKKSHSSPSLNPDASPVTAKVKRNVSERKDHRPETPGIKQKVT) are disordered. Residues Ser-998, Ser-1000, Ser-1001, Ser-1003, and Ser-1009 each carry the phosphoserine modification. Basic and acidic residues predominate over residues 1018 to 1028 (NVSERKDHRPE).

As to expression, ubiquitously expressed, with highest levels in liver. Present in brain, with highest levels in olfactory bulb, cortex, hippocampal pyramidal cell layer and cerebellar granule cell layer (at protein level).

The protein resides in the cell membrane. It localises to the cell projection. Its subcellular location is the ruffle membrane. It is found in the postsynaptic density. Its function is as follows. Guanine nucleotide exchange factor for ARF6. The sequence is that of PH and SEC7 domain-containing protein 3 (Psd3) from Mus musculus (Mouse).